The primary structure comprises 187 residues: dCTP deaminase (187 aa).

Residues 110–115, 134–136, Gln-155, Tyr-169, and Gln-179 contribute to the dCTP site; these read KSTYAR and TLE. Catalysis depends on Glu-136, which acts as the Proton donor/acceptor.

The protein belongs to the dCTP deaminase family. In terms of assembly, homotrimer.

The catalysed reaction is dCTP + H2O + H(+) = dUTP + NH4(+). It functions in the pathway pyrimidine metabolism; dUMP biosynthesis; dUMP from dCTP (dUTP route): step 1/2. Functionally, catalyzes the deamination of dCTP to dUTP. This is dCTP deaminase from Bordetella bronchiseptica (strain ATCC BAA-588 / NCTC 13252 / RB50) (Alcaligenes bronchisepticus).